The sequence spans 473 residues: 3-isopropylmalate dehydratase large subunit (473 aa).

Residues C349, C409, and C412 each contribute to the [4Fe-4S] cluster site.

This sequence belongs to the aconitase/IPM isomerase family. LeuC type 1 subfamily. As to quaternary structure, heterodimer of LeuC and LeuD. It depends on [4Fe-4S] cluster as a cofactor.

The enzyme catalyses (2R,3S)-3-isopropylmalate = (2S)-2-isopropylmalate. The protein operates within amino-acid biosynthesis; L-leucine biosynthesis; L-leucine from 3-methyl-2-oxobutanoate: step 2/4. Functionally, catalyzes the isomerization between 2-isopropylmalate and 3-isopropylmalate, via the formation of 2-isopropylmaleate. The protein is 3-isopropylmalate dehydratase large subunit of Gloeobacter violaceus (strain ATCC 29082 / PCC 7421).